The following is a 199-amino-acid chain: Elongation factor Ts (199 aa).

Positions 80–83 are involved in Mg(2+) ion dislocation from EF-Tu; that stretch reads TDFV.

It belongs to the EF-Ts family.

It is found in the cytoplasm. Its function is as follows. Associates with the EF-Tu.GDP complex and induces the exchange of GDP to GTP. It remains bound to the aminoacyl-tRNA.EF-Tu.GTP complex up to the GTP hydrolysis stage on the ribosome. In Thermodesulfovibrio yellowstonii (strain ATCC 51303 / DSM 11347 / YP87), this protein is Elongation factor Ts.